Here is a 132-residue protein sequence, read N- to C-terminus: Inclusion membrane protein E (132 aa).

2 consecutive transmembrane segments (helical) span residues 41–61 (LGVV…AVGV) and 66–86 (FALG…ATSA).

It is found in the secreted. The protein resides in the host vacuole. It localises to the host pathogen-containing vacuole. Its subcellular location is the host pathogen-containing vacuole membrane. Functionally, inclusion membrane protein probably involved in early modification events of the chlamydial inclusion. In Chlamydia trachomatis serovar L2 (strain ATCC VR-902B / DSM 19102 / 434/Bu), this protein is Inclusion membrane protein E.